A 159-amino-acid chain; its full sequence is Nucleotide-binding protein PLES_47741 (159 aa).

It belongs to the YajQ family.

Nucleotide-binding protein. This Pseudomonas aeruginosa (strain LESB58) protein is Nucleotide-binding protein PLES_47741.